The sequence spans 204 residues: uncharacterized protein (204 aa).

It is found in the mitochondrion. This is an uncharacterized protein from Arabidopsis thaliana (Mouse-ear cress).